Reading from the N-terminus, the 367-residue chain is 4-hydroxy-3-methylbut-2-en-1-yl diphosphate synthase (flavodoxin) (367 aa).

Residues C265, C268, C300, and E307 each coordinate [4Fe-4S] cluster.

The protein belongs to the IspG family. The cofactor is [4Fe-4S] cluster.

The enzyme catalyses (2E)-4-hydroxy-3-methylbut-2-enyl diphosphate + oxidized [flavodoxin] + H2O + 2 H(+) = 2-C-methyl-D-erythritol 2,4-cyclic diphosphate + reduced [flavodoxin]. It participates in isoprenoid biosynthesis; isopentenyl diphosphate biosynthesis via DXP pathway; isopentenyl diphosphate from 1-deoxy-D-xylulose 5-phosphate: step 5/6. Converts 2C-methyl-D-erythritol 2,4-cyclodiphosphate (ME-2,4cPP) into 1-hydroxy-2-methyl-2-(E)-butenyl 4-diphosphate. This Bacillus cereus (strain ATCC 10987 / NRS 248) protein is 4-hydroxy-3-methylbut-2-en-1-yl diphosphate synthase (flavodoxin).